The primary structure comprises 265 residues: Undecaprenyl-diphosphatase 1 (265 aa).

7 helical membrane passes run 4–24 (IIIAFILGIVEGLAEFLPISS), 42–62 (AKTFEIVIQLGAILAIAILYH), 84–104 (FHVFLGVFPAVVAGLLLHDVI), 108–128 (LFQPYTVVIGLVAGAILMIFA), 184–204 (SEFSFLIALPVMVGATGLDLL), 217–237 (MFAVGFITSFIVAMLAVVTFL), and 245–265 (LKPFAYYRILLAILFTVFVLL).

This sequence belongs to the UppP family.

The protein localises to the cell membrane. The enzyme catalyses di-trans,octa-cis-undecaprenyl diphosphate + H2O = di-trans,octa-cis-undecaprenyl phosphate + phosphate + H(+). Its function is as follows. Catalyzes the dephosphorylation of undecaprenyl diphosphate (UPP). Confers resistance to bacitracin. The chain is Undecaprenyl-diphosphatase 1 from Bacillus thuringiensis (strain Al Hakam).